Reading from the N-terminus, the 454-residue chain is tRNA modification GTPase MnmE (454 aa).

(6S)-5-formyl-5,6,7,8-tetrahydrofolate is bound by residues Arg-23, Glu-80, and Lys-120. Positions 216 to 377 (TIKIVIAGPP…LKNKILEITT (162 aa)) constitute a TrmE-type G domain. Asn-226 contributes to the K(+) binding site. GTP is bound by residues 226–231 (NVGKSS), 245–251 (TNIPGTT), and 270–273 (DTAG). Ser-230 lines the Mg(2+) pocket. The K(+) site is built by Thr-245, Ile-247, and Thr-250. Residue Thr-251 coordinates Mg(2+). Lys-454 provides a ligand contact to (6S)-5-formyl-5,6,7,8-tetrahydrofolate.

Belongs to the TRAFAC class TrmE-Era-EngA-EngB-Septin-like GTPase superfamily. TrmE GTPase family. As to quaternary structure, homodimer. Heterotetramer of two MnmE and two MnmG subunits. It depends on K(+) as a cofactor.

The protein resides in the cytoplasm. Exhibits a very high intrinsic GTPase hydrolysis rate. Involved in the addition of a carboxymethylaminomethyl (cmnm) group at the wobble position (U34) of certain tRNAs, forming tRNA-cmnm(5)s(2)U34. The protein is tRNA modification GTPase MnmE of Buchnera aphidicola subsp. Cinara cedri (strain Cc).